The sequence spans 294 residues: Pyridoxal 5'-phosphate synthase subunit PdxS (294 aa).

Asp24 provides a ligand contact to D-ribose 5-phosphate. Residue Lys81 is the Schiff-base intermediate with D-ribose 5-phosphate of the active site. D-ribose 5-phosphate is bound at residue Gly153. Residue Arg165 participates in D-glyceraldehyde 3-phosphate binding. Residues Gly214 and 235 to 236 (GS) each bind D-ribose 5-phosphate.

This sequence belongs to the PdxS/SNZ family. In the presence of PdxT, forms a dodecamer of heterodimers.

It catalyses the reaction aldehydo-D-ribose 5-phosphate + D-glyceraldehyde 3-phosphate + L-glutamine = pyridoxal 5'-phosphate + L-glutamate + phosphate + 3 H2O + H(+). It participates in cofactor biosynthesis; pyridoxal 5'-phosphate biosynthesis. Catalyzes the formation of pyridoxal 5'-phosphate from ribose 5-phosphate (RBP), glyceraldehyde 3-phosphate (G3P) and ammonia. The ammonia is provided by the PdxT subunit. Can also use ribulose 5-phosphate and dihydroxyacetone phosphate as substrates, resulting from enzyme-catalyzed isomerization of RBP and G3P, respectively. The chain is Pyridoxal 5'-phosphate synthase subunit PdxS from Geobacillus thermodenitrificans (strain NG80-2).